The primary structure comprises 137 residues: Small ribosomal subunit protein uS12 (137 aa).

A disordered region spans residues 1-57 (MPTINQLVRKPRQSKIKKSDSPALNKGFNSKKKKFTDLNSPQKRGVCTRVGTMTPRK). Asp-102 carries the post-translational modification 3-methylthioaspartic acid. The tract at residues 118 to 137 (SGVDGRRQGRSLYGTKKPKN) is disordered.

Belongs to the universal ribosomal protein uS12 family. As to quaternary structure, part of the 30S ribosomal subunit. Contacts proteins S8 and S17. May interact with IF1 in the 30S initiation complex.

Its function is as follows. With S4 and S5 plays an important role in translational accuracy. Interacts with and stabilizes bases of the 16S rRNA that are involved in tRNA selection in the A site and with the mRNA backbone. Located at the interface of the 30S and 50S subunits, it traverses the body of the 30S subunit contacting proteins on the other side and probably holding the rRNA structure together. The combined cluster of proteins S8, S12 and S17 appears to hold together the shoulder and platform of the 30S subunit. The sequence is that of Small ribosomal subunit protein uS12 from Staphylococcus aureus (strain COL).